We begin with the raw amino-acid sequence, 532 residues long: Light-independent protochlorophyllide reductase subunit B (532 aa).

Asp-36 lines the [4Fe-4S] cluster pocket. Asp-292 (proton donor) is an active-site residue. Position 428–429 (428–429 (GL)) interacts with substrate. Positions 445-486 (EEEEPESISNGHAAAAGSEGGVPDSGEAGDAGDTDGMPWSPD) are disordered.

Belongs to the ChlB/BchB/BchZ family. As to quaternary structure, protochlorophyllide reductase is composed of three subunits; BchL, BchN and BchB. Forms a heterotetramer of two BchB and two BchN subunits. It depends on [4Fe-4S] cluster as a cofactor.

It carries out the reaction chlorophyllide a + oxidized 2[4Fe-4S]-[ferredoxin] + 2 ADP + 2 phosphate = protochlorophyllide a + reduced 2[4Fe-4S]-[ferredoxin] + 2 ATP + 2 H2O. It participates in porphyrin-containing compound metabolism; bacteriochlorophyll biosynthesis (light-independent). Its function is as follows. Component of the dark-operative protochlorophyllide reductase (DPOR) that uses Mg-ATP and reduced ferredoxin to reduce ring D of protochlorophyllide (Pchlide) to form chlorophyllide a (Chlide). This reaction is light-independent. The NB-protein (BchN-BchB) is the catalytic component of the complex. The protein is Light-independent protochlorophyllide reductase subunit B of Chlorobium phaeobacteroides (strain BS1).